We begin with the raw amino-acid sequence, 548 residues long: MKTPADTGFAFPDWAYKPESSPGSRQIQLWHFILELLRKEEYQGVIAWQGDYGEFVIKDPDEVARLWGVRKCKPQMNYDKLSRALRYYYNKRILHKTKGKRFTYKFNFNKLVLVNYPFIDVGLAGGAVPQSAPPVPSGGSHFRFPPSTPSEVLSPTEDPRSPPACSSSSSSLFSAVVARRLGRGSVSDCSDGTSELEEPLGEDPRARPPGPPDLGAFRGPPLARLPHDPGVFRVYPRPRGGPEPLSPFPVSPLAGPGSLLPPQLSPALPMTPTHLAYTPSPTLSPMYPSGGGGPSGSGGGSHFSFSPEDMKRYLQAHTQSVYNYHLSPRAFLHYPGLVVPQPQRPDKCPLPPMAPETPPVPSSASSSSSSSSSPFKFKLQPPPLGRRQRAAGEKAVAGADKSGGSAGGLAEGAGALAPPPPPPQIKVEPISEGESEEVEVTDISDEDEEDGEVFKTPRAPPAPPKPEPGEAPGASQCMPLKLRFKRRWSEDCRLEGGGGPAGGFEDEGEDKKVRGEGPGEAGGPLTPRRVSSDLQHATAQLSLEHRDS.

Thr3 and Thr7 each carry phosphothreonine. Phosphoserine occurs at positions 20 and 24. Residues 27 to 107 (IQLWHFILEL…KGKRFTYKFN (81 aa)) constitute a DNA-binding region (ETS). 3 disordered regions span residues 130–169 (QSAP…SSSS), 184–225 (GSVS…LARL), and 280–304 (SPTL…SHFS). Ser185 and Ser190 each carry phosphoserine. Gly residues predominate over residues 289 to 301 (SGGGGPSGSGGGS). Ser327 is modified (phosphoserine). The interval 342 to 478 (PQRPDKCPLP…GEAPGASQCM (137 aa)) is disordered. Residues 348–361 (CPLPPMAPETPPVP) show a composition bias toward pro residues. Low complexity-rich tracts occupy residues 362-373 (SSASSSSSSSSS) and 394-403 (KAVAGADKSG). 2 positions are modified to phosphoserine: Ser431 and Ser435. Positions 431 to 451 (SEGESEEVEVTDISDEDEEDG) are enriched in acidic residues. Thr441 carries the phosphothreonine modification. Ser444 bears the Phosphoserine mark. Residues Lys465, Lys481, and Lys512 each participate in a glycyl lysine isopeptide (Lys-Gly) (interchain with G-Cter in SUMO2) cross-link. The segment at 492–548 (CRLEGGGGPAGGFEDEGEDKKVRGEGPGEAGGPLTPRRVSSDLQHATAQLSLEHRDS) is disordered. The residue at position 526 (Thr526) is a Phosphothreonine; by MAPK1. Phosphoserine occurs at positions 531, 532, and 548. Residues 532–541 (SDLQHATAQL) show a composition bias toward polar residues.

The protein belongs to the ETS family. Phosphorylated by multiple kinases including MAPK1/ERK2 at THR-526. Phosphorylation regulates the activity of ERF. Highest levels in testis, ovary, pancreas, and heart.

It is found in the nucleus. Potent transcriptional repressor that binds to the H1 element of the Ets2 promoter. May regulate other genes involved in cellular proliferation. Required for extraembryonic ectoderm differentiation, ectoplacental cone cavity closure, and chorioallantoic attachment. May be important for regulating trophoblast stem cell differentiation. The sequence is that of ETS domain-containing transcription factor ERF (ERF) from Homo sapiens (Human).